The sequence spans 430 residues: Phosphoribosylamine--glycine ligase (430 aa).

The ATP-grasp domain occupies 109–316 (KDFMARHGIP…LLDLIEAALN (208 aa)). ATP is bound at residue 135–196 (VRQQGAPIVI…EEYLDGEEAS (62 aa)). 2 residues coordinate Mg(2+): Glu286 and Asn288.

The protein belongs to the GARS family. The cofactor is Mg(2+). It depends on Mn(2+) as a cofactor.

It catalyses the reaction 5-phospho-beta-D-ribosylamine + glycine + ATP = N(1)-(5-phospho-beta-D-ribosyl)glycinamide + ADP + phosphate + H(+). Its pathway is purine metabolism; IMP biosynthesis via de novo pathway; N(1)-(5-phospho-D-ribosyl)glycinamide from 5-phospho-alpha-D-ribose 1-diphosphate: step 2/2. In Xylella fastidiosa (strain Temecula1 / ATCC 700964), this protein is Phosphoribosylamine--glycine ligase.